A 561-amino-acid polypeptide reads, in one-letter code: Asparagine synthetase [glutamine-hydrolyzing] (561 aa).

Cys2 acts as the For GATase activity in catalysis. A Glutamine amidotransferase type-2 domain is found at 2–191 (CGIWALFGSD…PGHYEVLDLK (190 aa)). Residues 49–53 (RLAVV), 75–77 (NGE), and Asp97 contribute to the L-glutamine site. Residues 213–536 (HALYDSVEKL…PGRADWLTHY (324 aa)) enclose the Asparagine synthetase domain. Residues Leu256, Ile288, and 363-364 (SG) each bind ATP. Residue Lys385 is modified to N6-acetyllysine. A Phosphothreonine modification is found at Thr545. Residue Ser557 is modified to Phosphoserine.

It carries out the reaction L-aspartate + L-glutamine + ATP + H2O = L-asparagine + L-glutamate + AMP + diphosphate + H(+). The protein operates within amino-acid biosynthesis; L-asparagine biosynthesis; L-asparagine from L-aspartate (L-Gln route): step 1/1. This is Asparagine synthetase [glutamine-hydrolyzing] (ASNS) from Mesocricetus auratus (Golden hamster).